Reading from the N-terminus, the 578-residue chain is Probable cytochrome c oxidase subunit 1-alpha (578 aa).

The interval 1–21 (MSILNEPQGASAAEDSYENEL) is disordered. A helical transmembrane segment spans residues 44 to 64 (IGTMYLVTSFAFFVIGGVMAL). His90 lines the Fe(II)-heme a pocket. The next 6 membrane-spanning stretches (helical) occupy residues 93–113 (IMLL…IMPL), 125–145 (LNMF…GGFL), 174–194 (LWIM…VNFI), 217–237 (VLLT…ALFA), 262–282 (LFWF…FGIV), and 294–314 (IFGY…SVTV). Positions 268 and 272 each coordinate Cu cation. The segment at residues 268-272 (HPEVY) is a cross-link (1'-histidyl-3'-tyrosine (His-Tyr)). Cu cation contacts are provided by His317 and His318. Helical transmembrane passes span 319 to 339 (MYVT…LIAV) and 363 to 383 (MLWS…GVIL). His401 lines the heme a3 pocket. 3 helical membrane-spanning segments follow: residues 402 to 422 (FHYV…HFWW), 437 to 457 (ITFW…HWLG), and 480 to 500 (ISTI…YNIW). A Fe(II)-heme a-binding site is contributed by His403.

The protein belongs to the heme-copper respiratory oxidase family. In terms of assembly, associates with subunits II, III and IV to form cytochrome c oxidase. Requires Cu(2+) as cofactor. It depends on heme as a cofactor.

Its subcellular location is the cell membrane. It carries out the reaction 4 Fe(II)-[cytochrome c] + O2 + 8 H(+)(in) = 4 Fe(III)-[cytochrome c] + 2 H2O + 4 H(+)(out). Its pathway is energy metabolism; oxidative phosphorylation. In terms of biological role, cytochrome c oxidase is the component of the respiratory chain that catalyzes the reduction of oxygen to water. Subunits 1-3 form the functional core of the enzyme complex. CO I is the catalytic subunit of the enzyme. Electrons originating in cytochrome c are transferred via the copper A center of subunit 2 and heme A of subunit 1 to the bimetallic center formed by heme A3 and copper B. This chain is Probable cytochrome c oxidase subunit 1-alpha (ctaD1), found in Streptomyces coelicolor (strain ATCC BAA-471 / A3(2) / M145).